Consider the following 245-residue polypeptide: MAAAIASSLIRQKRQAREREKSNACKCVSSPSKGKTSCDKNKLNVFSRVKLFGSKKRRRRRPEPQLKGIVTKLYSRQGYHLQLQADGTIDGTKDEDSTYTLFNLIPVGLRVVAIQGVQTKLYLAMNSEGYLYTSEHFTPECKFKESVFENYYVTYSSMIYRQQQSGRGWYLGLNKEGEIMKGNHVKKNKPAAHFLPKPLKVAMYKEPSLHDLTEFSRSGSGTPTKSRSVSGVLNGGKSMSHNEST.

Residues 1–36 are disordered; it reads MAAAIASSLIRQKRQAREREKSNACKCVSSPSKGKT. The interval 1-62 is mediates targeting to the nucleus; sequence MAAAIASSLI…GSKKRRRRRP (62 aa). The segment at 67–201 is mediates interaction with sodium channels; the sequence is KGIVTKLYSR…AHFLPKPLKV (135 aa). Residues 157–164 are tubulin-binding domain necessary and sufficient for tubulin-binding; sequence SMIYRQQQ. Serine 208 is modified (phosphoserine). The interval 213-245 is disordered; the sequence is TEFSRSGSGTPTKSRSVSGVLNGGKSMSHNEST. Over residues 215–245 the composition is skewed to polar residues; sequence FSRSGSGTPTKSRSVSGVLNGGKSMSHNEST.

This sequence belongs to the heparin-binding growth factors family. As to quaternary structure, interacts with SCN8A; regulates SCN8A activity. Interacts with SCN1A; may regulate SCN1A activity. Interacts with SCN5A; the interaction is direct and may regulate SNC5A density at membranes and function. May also interact with SCN2A and SCN11A. Interacts with MAPK8IP2; may regulate the MAPK8IP2 scaffolding activity. In terms of processing, may be phosphorylated. In terms of tissue distribution, detected in brain, eye and heart. In brain, the different isoforms display different patterns of expression. Expressed in brain and heart (at protein level). Isoform 3 is highly expressed in cardiac myocytes while isoform 1 is the most abundant in brain.

The protein localises to the cell projection. It is found in the filopodium. The protein resides in the growth cone. It localises to the dendrite. Its subcellular location is the cell membrane. The protein localises to the sarcolemma. It is found in the cytoplasm. The protein resides in the nucleus. Microtubule-binding protein which directly binds tubulin and is involved in both polymerization and stabilization of microtubules. Through its action on microtubules, may participate to the refinement of axons by negatively regulating axonal and leading processes branching. Plays a crucial role in neuron polarization and migration in the cerebral cortex and the hippocampus. Regulates voltage-gated sodium channel transport and function. May also play a role in MAPK signaling. Required for the development of axonal initial segment-targeting inhibitory GABAergic synapses made by chandelier neurons. In terms of biological role, seems not to be involved in neuroblast polarization and migration but regulates axon branching. The chain is Fibroblast growth factor 13 from Mus musculus (Mouse).